The sequence spans 219 residues: Cytidylate kinase (219 aa).

15-23 (GPAASGKGT) lines the ATP pocket.

It belongs to the cytidylate kinase family. Type 1 subfamily.

It is found in the cytoplasm. The catalysed reaction is CMP + ATP = CDP + ADP. It catalyses the reaction dCMP + ATP = dCDP + ADP. The polypeptide is Cytidylate kinase (Brucella abortus (strain S19)).